A 244-amino-acid polypeptide reads, in one-letter code: Haloacid dehalogenase-like hydrolase domain-containing protein 3 (244 aa).

This sequence belongs to the HAD-like hydrolase superfamily.

The polypeptide is Haloacid dehalogenase-like hydrolase domain-containing protein 3 (hdhd3) (Xenopus laevis (African clawed frog)).